The primary structure comprises 627 residues: tRNA uridine 5-carboxymethylaminomethyl modification enzyme MnmG (627 aa).

Residues 13 to 18 (GGGHAG), Val-125, and Ser-180 each bind FAD. Residue 274–288 (GPRYCPSIEDKVVRF) participates in NAD(+) binding. An FAD-binding site is contributed by Gln-371.

Belongs to the MnmG family. Homodimer. Heterotetramer of two MnmE and two MnmG subunits. It depends on FAD as a cofactor.

The protein resides in the cytoplasm. In terms of biological role, NAD-binding protein involved in the addition of a carboxymethylaminomethyl (cmnm) group at the wobble position (U34) of certain tRNAs, forming tRNA-cmnm(5)s(2)U34. The protein is tRNA uridine 5-carboxymethylaminomethyl modification enzyme MnmG of Francisella tularensis subsp. holarctica (strain FTNF002-00 / FTA).